A 188-amino-acid polypeptide reads, in one-letter code: MDVNIAPLRAWDDFFPGSDRFAQPDFRDISKWNNRVVSNLLYYQTNYLVVAAMMISVVGFLSPFNMILGGIVVVLVFTGFVWAAHNKDALRRLKKRYPTTFVMVVMLASYFLISMFGGVMVFVFGITFPLLLMFIHASLRLRNLKNKLENKMEGIGLKRTPMGIVLDALEQQEEGINRLTDYISKVKE.

Met-1 is modified (N-acetylmethionine). The Cytoplasmic portion of the chain corresponds to 1 to 35 (MDVNIAPLRAWDDFFPGSDRFAQPDFRDISKWNNR). Helical transmembrane passes span 36–56 (VVSNLLYYQTNYLVVAAMMIS) and 57–77 (VVGFLSPFNMILGGIVVVLVF). At 78 to 93 (TGFVWAAHNKDALRRL) the chain is on the cytoplasmic side. The next 2 membrane-spanning stretches (helical) occupy residues 94–114 (KKRYPTTFVMVVMLASYFLIS) and 115–135 (MFGGVMVFVFGITFPLLLMFI). Residues 103-117 (MVVMLASYFLISMFG) form a required for homodimer formation and heterodimer formation with ARL6IP1 region. At 136–188 (HASLRLRNLKNKLENKMEGIGLKRTPMGIVLDALEQQEEGINRLTDYISKVKE) the chain is on the cytoplasmic side. The segment at 136–188 (HASLRLRNLKNKLENKMEGIGLKRTPMGIVLDALEQQEEGINRLTDYISKVKE) is targeting to endoplasmic reticulum membrane.

The protein belongs to the PRA1 family. In terms of assembly, homodimer. Heterodimer with ARL6IP1. Forms multimers. Interacts with ARL6. Interacts with prenylated RAB1A and RAB3A. Interacts with SLC1A1/EAAC1. Interacts with RTN2 (via first transmembrane domain). Does not interact with VAMP1, VAMP2 or VAMP3.

Its subcellular location is the endoplasmic reticulum membrane. The protein localises to the cell membrane. It is found in the cytoplasm. The protein resides in the cytoskeleton. Its function is as follows. Regulates intracellular concentrations of taurine and glutamate. Negatively modulates SLC1A1/EAAC1 glutamate transport activity by decreasing its affinity for glutamate in a PKC activity-dependent manner. Plays a role in the retention of SLC1A1/EAAC1 in the endoplasmic reticulum. The chain is PRA1 family protein 3 (ARL6IP5) from Macaca fascicularis (Crab-eating macaque).